A 629-amino-acid chain; its full sequence is Translation initiation factor IF-2 (629 aa).

A disordered region spans residues 1–20 (MAKNIKTNKKPQQVNKKEMS). The region spanning 127 to 297 (HRAPIVTIMG…LLIAEMQDYK (171 aa)) is the tr-type G domain. The G1 stretch occupies residues 136 to 143 (GHVDHGKT). GTP is bound at residue 136–143 (GHVDHGKT). The interval 161–165 (GITQA) is G2. The interval 183–186 (DTPG) is G3. GTP-binding positions include 183-187 (DTPGH) and 237-240 (NKCD). Residues 237–240 (NKCD) are G4. The segment at 273–275 (SAK) is G5.

This sequence belongs to the TRAFAC class translation factor GTPase superfamily. Classic translation factor GTPase family. IF-2 subfamily.

It localises to the cytoplasm. One of the essential components for the initiation of protein synthesis. Protects formylmethionyl-tRNA from spontaneous hydrolysis and promotes its binding to the 30S ribosomal subunits. Also involved in the hydrolysis of GTP during the formation of the 70S ribosomal complex. The polypeptide is Translation initiation factor IF-2 (Mesoplasma florum (strain ATCC 33453 / NBRC 100688 / NCTC 11704 / L1) (Acholeplasma florum)).